Consider the following 420-residue polypeptide: LanC-like protein 3 (420 aa).

It belongs to the LanC-like protein family.

This is LanC-like protein 3 (Lancl3) from Mus musculus (Mouse).